A 206-amino-acid chain; its full sequence is Uridine kinase (206 aa).

9-16 lines the ATP pocket; sequence GGSGSGKT.

The protein belongs to the uridine kinase family.

It is found in the cytoplasm. The catalysed reaction is uridine + ATP = UMP + ADP + H(+). The enzyme catalyses cytidine + ATP = CMP + ADP + H(+). It functions in the pathway pyrimidine metabolism; CTP biosynthesis via salvage pathway; CTP from cytidine: step 1/3. Its pathway is pyrimidine metabolism; UMP biosynthesis via salvage pathway; UMP from uridine: step 1/1. The polypeptide is Uridine kinase (Borrelia turicatae (strain 91E135)).